The primary structure comprises 597 residues: MTNPGPSRHLFADVLARVHAVCSALVEEGALPAGLDLSRIVVEPPREASHGDMATNAAMVLAKGAKSKPRDLAEKVAAKLRADGLIDKAEIAGPGFINLTLKPQVWSDALRTVLREGDGYGRSAIGAGEKVNVEYVSANPTGPMHVGHCRGAVFGDALASLLSFAGYGVTREYYINDAGAQVDVLARSAYLRYREALGQDIGEIPEGLYPGDYLKPVGQALAAEHGDSLLKAPEAEWLPVARAKAIAMMMEMIKGDLAALNIQHEVFFSERSLIEGGSDRVAATIDFLRAKGDVYEGRLPPPKGAPVEDYEDREQTLFRATAYGDDIDRPLKKSDGGYTYFASDIAYHKTKFDRGFLNMVDVWGADHGGYIKRVQAAIKAVTSGKATLDVKIVQLVKLLRNGEPVKMSKRSGDFVTLREVVDEVGSDAVRFMMLFRKNDAVLDFDLAKVIEQSKDNPVFYVQYGHARGFSIFRNAREAFPDLPEDASKRAAFLAAAAVERLTDPAELGLLRRLALYPRTVEAAALAHEPHRIAFYLYDLASEFHALWTKGRDMPHLRFIINNDAVITRARLALVQGVVSVLASGLAVLGVHAPNEMR.

The 'HIGH' region motif lies at 138–148; it reads ANPTGPMHVGH.

This sequence belongs to the class-I aminoacyl-tRNA synthetase family. In terms of assembly, monomer.

It localises to the cytoplasm. It catalyses the reaction tRNA(Arg) + L-arginine + ATP = L-arginyl-tRNA(Arg) + AMP + diphosphate. The sequence is that of Arginine--tRNA ligase from Nitrobacter hamburgensis (strain DSM 10229 / NCIMB 13809 / X14).